We begin with the raw amino-acid sequence, 239 residues long: Uridylate kinase (239 aa).

13 to 16 (KLSG) serves as a coordination point for ATP. Residue Gly-55 participates in UMP binding. ATP contacts are provided by Gly-56 and Arg-60. UMP is bound by residues Asp-75 and 136–143 (TGNPFFTT). Positions 163, 164, 169, and 172 each coordinate ATP.

It belongs to the UMP kinase family. As to quaternary structure, homohexamer.

The protein resides in the cytoplasm. It catalyses the reaction UMP + ATP = UDP + ADP. Its pathway is pyrimidine metabolism; CTP biosynthesis via de novo pathway; UDP from UMP (UMPK route): step 1/1. With respect to regulation, inhibited by UTP. Its function is as follows. Catalyzes the reversible phosphorylation of UMP to UDP. The chain is Uridylate kinase from Neisseria meningitidis serogroup A / serotype 4A (strain DSM 15465 / Z2491).